A 233-amino-acid polypeptide reads, in one-letter code: DnaA regulatory inactivator Hda (233 aa).

It belongs to the DnaA family. HdA subfamily. The active form seems to be an ADP-bound monomer. Forms the RIDA complex (regulatory inactivation of DnaA) of ATP-DnaA, ADP-Hda and the DNA-loaded beta sliding clamp (dnaN).

Mediates the interaction of DNA replication initiator protein DnaA with DNA polymerase subunit beta sliding clamp (dnaN). Stimulates hydrolysis of ATP-DnaA to ADP-DnaA, rendering DnaA inactive for reinitiation, a process called regulatory inhibition of DnaA or RIDA. This chain is DnaA regulatory inactivator Hda, found in Escherichia fergusonii (strain ATCC 35469 / DSM 13698 / CCUG 18766 / IAM 14443 / JCM 21226 / LMG 7866 / NBRC 102419 / NCTC 12128 / CDC 0568-73).